The following is a 278-amino-acid chain: HTH-type transcriptional activator RhaS (278 aa).

Residues 174 to 272 (NQLLAWLEDH…DWSPRDIRQG (99 aa)) enclose the HTH araC/xylS-type domain. 2 DNA-binding regions (H-T-H motif) span residues 191 to 212 (EEVA…KQQT) and 239 to 262 (VTDI…RREF).

As to quaternary structure, binds DNA as a dimer.

It is found in the cytoplasm. In terms of biological role, activates expression of the rhaBAD and rhaT operons. The sequence is that of HTH-type transcriptional activator RhaS from Klebsiella pneumoniae (strain 342).